A 183-amino-acid polypeptide reads, in one-letter code: tRNA-splicing endonuclease (183 aa).

Catalysis depends on residues Tyr120, His128, and Lys159.

Belongs to the tRNA-intron endonuclease family. Archaeal short subfamily. Homotetramer; although the tetramer contains four active sites, only two participate in the cleavage. Therefore, it should be considered as a dimer of dimers.

It carries out the reaction pretRNA = a 3'-half-tRNA molecule with a 5'-OH end + a 5'-half-tRNA molecule with a 2',3'-cyclic phosphate end + an intron with a 2',3'-cyclic phosphate and a 5'-hydroxyl terminus.. In terms of biological role, endonuclease that removes tRNA introns. Cleaves pre-tRNA at the 5'- and 3'-splice sites to release the intron. The products are an intron and two tRNA half-molecules bearing 2',3' cyclic phosphate and 5'-OH termini. Recognizes a pseudosymmetric substrate in which 2 bulged loops of 3 bases are separated by a stem of 4 bp. This is tRNA-splicing endonuclease from Pyrobaculum aerophilum (strain ATCC 51768 / DSM 7523 / JCM 9630 / CIP 104966 / NBRC 100827 / IM2).